The sequence spans 82 residues: HLQFHCPRVERNQAKKNFSCKLCDKVYTSLGALKMHIRTHTLPCKCDICHKAFSRPWLLQGHIRTHTGEKPFSCQHCHRAFA.

C2H2-type zinc fingers lie at residues 1–5 (HLQFH), 18–40 (FSCK…IRTH), 44–66 (CKCD…IRTH), and 72–82 (FSCQHCHRAFA).

The protein belongs to the snail C2H2-type zinc-finger protein family.

It is found in the nucleus. This Bradysia coprophila (Dark-winged fungus gnat) protein is Escargot/snail protein homolog.